The primary structure comprises 95 residues: Small ubiquitin-related modifier 4 (95 aa).

Residues 17–95 (HINLKVAGQD…VFQQPTGGVY (79 aa)) form the Ubiquitin-like domain. Residue Gly-93 forms a Glycyl lysine isopeptide (Gly-Lys) (interchain with K-? in acceptor proteins) linkage. Residues 94 to 95 (VY) constitute a propeptide that is removed on maturation.

Belongs to the ubiquitin family. SUMO subfamily. In terms of assembly, interacts with SAE2. Covalently attached to a number of proteins. In contrast to SUMO1, SUMO2 and SUMO3, seems to be insensitive to sentrin-specific proteases due to the presence of Pro-90. This may impair processing to mature form and conjugation to substrates. In terms of tissue distribution, expressed mainly in adult and embryonic kidney. Expressed at various levels in immune tissues, with the highest expression in the lymph node and spleen.

Its function is as follows. Ubiquitin-like protein which can be covalently attached to target lysines as a monomer. Does not seem to be involved in protein degradation and may modulate protein subcellular localization, stability or activity. Upon oxidative stress, conjugates to various anti-oxidant enzymes, chaperones, and stress defense proteins. May also conjugate to NFKBIA, TFAP2A and FOS, negatively regulating their transcriptional activity, and to NR3C1, positively regulating its transcriptional activity. Covalent attachment to its substrates requires prior activation by the E1 complex SAE1-SAE2 and linkage to the E2 enzyme UBE2I. The polypeptide is Small ubiquitin-related modifier 4 (SUMO4) (Homo sapiens (Human)).